Here is a 461-residue protein sequence, read N- to C-terminus: Argininosuccinate lyase (461 aa).

It belongs to the lyase 1 family. Argininosuccinate lyase subfamily.

Its subcellular location is the cytoplasm. It carries out the reaction 2-(N(omega)-L-arginino)succinate = fumarate + L-arginine. The protein operates within amino-acid biosynthesis; L-arginine biosynthesis; L-arginine from L-ornithine and carbamoyl phosphate: step 3/3. The protein is Argininosuccinate lyase of Chlorobium chlorochromatii (strain CaD3).